A 180-amino-acid chain; its full sequence is UPF0102 protein Tery_0733 (180 aa).

Belongs to the UPF0102 family.

This Trichodesmium erythraeum (strain IMS101) protein is UPF0102 protein Tery_0733.